Consider the following 269-residue polypeptide: Indole-3-glycerol phosphate synthase (269 aa).

Belongs to the TrpC family.

The catalysed reaction is 1-(2-carboxyphenylamino)-1-deoxy-D-ribulose 5-phosphate + H(+) = (1S,2R)-1-C-(indol-3-yl)glycerol 3-phosphate + CO2 + H2O. The protein operates within amino-acid biosynthesis; L-tryptophan biosynthesis; L-tryptophan from chorismate: step 4/5. The chain is Indole-3-glycerol phosphate synthase from Rhodococcus jostii (strain RHA1).